Here is a 337-residue protein sequence, read N- to C-terminus: tRNA N6-adenosine threonylcarbamoyltransferase (337 aa).

2 residues coordinate Fe cation: His-111 and His-115. Residues 134-138, Asp-167, Gly-180, and Asn-272 contribute to the substrate site; that span reads LVSGG. Asp-300 contributes to the Fe cation binding site.

It belongs to the KAE1 / TsaD family. Fe(2+) is required as a cofactor.

It is found in the cytoplasm. It catalyses the reaction L-threonylcarbamoyladenylate + adenosine(37) in tRNA = N(6)-L-threonylcarbamoyladenosine(37) in tRNA + AMP + H(+). Its function is as follows. Required for the formation of a threonylcarbamoyl group on adenosine at position 37 (t(6)A37) in tRNAs that read codons beginning with adenine. Is involved in the transfer of the threonylcarbamoyl moiety of threonylcarbamoyl-AMP (TC-AMP) to the N6 group of A37, together with TsaE and TsaB. TsaD likely plays a direct catalytic role in this reaction. The protein is tRNA N6-adenosine threonylcarbamoyltransferase of Escherichia coli (strain SMS-3-5 / SECEC).